Reading from the N-terminus, the 829-residue chain is Leucine--tRNA ligase (829 aa).

A 'HIGH' region motif is present at residues 42–52 (PYPSGNLHMGH). The 'KMSKS' region motif lies at 582–586 (KMSKS). Lys-585 provides a ligand contact to ATP.

Belongs to the class-I aminoacyl-tRNA synthetase family.

Its subcellular location is the cytoplasm. It carries out the reaction tRNA(Leu) + L-leucine + ATP = L-leucyl-tRNA(Leu) + AMP + diphosphate. The protein is Leucine--tRNA ligase of Moorella thermoacetica (strain ATCC 39073 / JCM 9320).